A 309-amino-acid chain; its full sequence is Olfactory receptor 14A16 (309 aa).

The Extracellular segment spans residues 1–23; it reads MANLTIVTEFILMGFSTNKNMCI. N3 is a glycosylation site (N-linked (GlcNAc...) asparagine). Residues 24-44 traverse the membrane as a helical segment; it reads LHSILFLLIYLCALMGNVLII. Topologically, residues 45-52 are cytoplasmic; the sequence is MITTLDHH. Residues 53–73 traverse the membrane as a helical segment; it reads LHTPVYFFLKNLSFLDLCLIS. Topologically, residues 74-97 are extracellular; that stretch reads VTAPKSIANSLIHNNSISFLGCVS. Residue N87 is glycosylated (N-linked (GlcNAc...) asparagine). Cysteines 95 and 187 form a disulfide. The helical transmembrane segment at 98-118 threads the bilayer; that stretch reads QVFLLLSSASAELLLLTVMSF. Over 119 to 131 the chain is Cytoplasmic; it reads DRYTAICHPLHYD. Residues 132-152 traverse the membrane as a helical segment; the sequence is VIMDRSTCVQRATVSWLYGGL. Residues 153-194 lie on the Extracellular side of the membrane; it reads IAVMHTAGTFSLSYCGSNMVHQFFCDIPQLLAISCSENLIRE. A helical membrane pass occupies residues 195-215; it reads IALILINVVLDFCCFIVIIIT. Residues 216–235 lie on the Cytoplasmic side of the membrane; it reads YVHVFSTVKKIPSTEGQSKA. A helical transmembrane segment spans residues 236-255; it reads YSICLPHLLVVLFLSTGFIA. The Extracellular portion of the chain corresponds to 256 to 268; that stretch reads YLKPASESPSILD. Residues 269–289 form a helical membrane-spanning segment; it reads AVISVFYTMLPPTFNPIIYSL. Topologically, residues 290 to 309 are cytoplasmic; sequence RNKAIKVALGMLIKGKLTKK.

It belongs to the G-protein coupled receptor 1 family.

The protein resides in the cell membrane. In terms of biological role, odorant receptor. In Homo sapiens (Human), this protein is Olfactory receptor 14A16 (OR14A16).